Consider the following 37-residue polypeptide: Hemextin B (37 aa).

Heterotetramer composed of 2 hemextin A and 2 hemextin B chains; non-covalently linked. Does not exist as a complex in the crude venom. Post-translationally, may contain several disulfide bonds. Expressed by the venom gland.

It localises to the secreted. Functionally, hemextin B (monomer): does not show anticoagulant activity. Seems only to synergitically enhance hemextin A activity. Its function is as follows. Hemextin AB complex: specifically inhibits the activation of FX (F10) by the TF-FVIIa complex (extrinsic tenase complex (ETC)) (IC(50)= 100 nM, Ki=50 nM) by non-competitively inhibiting the enzymatic activity of FVIIa. The polypeptide is Hemextin B (Hemachatus haemachatus (Rinkhals)).